The sequence spans 404 residues: Major outer membrane porin (404 aa).

Residues 1 to 22 (MKKLLKSVLAFAVLGSASSLHA) form the signal peptide. The segment at 85-110 (GPVPTTTDTDAAADITTSTPRENPAY) is disordered. Residues 89 to 103 (TTTDTDAAADITTST) are compositionally biased toward low complexity.

Belongs to the chlamydial porin (CP) (TC 1.B.2) family. Part of a disulfide cross-linked outer membrane complex (COMC) composed of the major outer membrane porin (MOMP), the small cysteine-rich protein (OmcA) and the large cysteine-rich periplasmic protein (OmcB).

The protein localises to the cell outer membrane. Functionally, in elementary bodies (EBs, the infectious stage, which is able to survive outside the host cell) provides the structural integrity of the outer envelope through disulfide cross-links with the small cysteine-rich protein and the large cysteine-rich periplasmic protein. It has been described in publications as the Sarkosyl-insoluble COMC (Chlamydia outer membrane complex), and serves as the functional equivalent of peptidoglycan. Its function is as follows. Permits diffusion of specific solutes through the outer membrane. The protein is Major outer membrane porin (ompA) of Chlamydia muridarum.